A 635-amino-acid polypeptide reads, in one-letter code: tRNA uridine 5-carboxymethylaminomethyl modification enzyme MnmG (635 aa).

Position 15–20 (15–20) interacts with FAD; it reads GAGHAG. NAD(+) is bound at residue 276–290; sequence GPRYCPSIEDKIVRF.

This sequence belongs to the MnmG family. In terms of assembly, homodimer. Heterotetramer of two MnmE and two MnmG subunits. FAD serves as cofactor.

Its subcellular location is the cytoplasm. In terms of biological role, NAD-binding protein involved in the addition of a carboxymethylaminomethyl (cmnm) group at the wobble position (U34) of certain tRNAs, forming tRNA-cmnm(5)s(2)U34. The polypeptide is tRNA uridine 5-carboxymethylaminomethyl modification enzyme MnmG (Streptococcus sanguinis (strain SK36)).